We begin with the raw amino-acid sequence, 223 residues long: Ras-related protein Rab-32 (223 aa).

N-acetylalanine is present on A2. GTP is bound by residues V34, G35, K36, T37, S38, S49, Q50, Y52, and T55. T37 provides a ligand contact to Mg(2+). Residues 46–60 carry the Switch 1 motif; that stretch reads QLFSQHYRATIGVDF. T55 contacts Mg(2+). S69 bears the Phosphoserine mark. Residue D79 coordinates Mg(2+). 6 residues coordinate GTP: G82, N141, K142, D144, A173, and K174. The short motif at 82–95 is the Switch 2 element; that stretch reads GQERFGNMTRVYYK. Positions 176-195 are PKA-RII subunit binding domain; that stretch reads NINIDEATRFLVENMLANQQ. S-geranylgeranyl cysteine attachment occurs at residues C222 and C223.

This sequence belongs to the small GTPase superfamily. Rab family. In terms of assembly, interacts with ANKRD27. A decreased interaction with ANKRD27 seen in the presence of SGSM2. Interacts with LRRK2 (via N-terminus); this interaction results in stimulation of RAB10 phosphorylation by LRRK2. Mg(2+) is required as a cofactor. As to expression, widely expressed with highest levels in liver. Strong expression also found in melanocyte, platelet, mast cell and fibroblast cell lines.

The protein resides in the mitochondrion. It localises to the mitochondrion outer membrane. The protein localises to the cytoplasmic vesicle. Its subcellular location is the phagosome. It is found in the phagosome membrane. The protein resides in the melanosome. It localises to the melanosome membrane. The catalysed reaction is GTP + H2O = GDP + phosphate + H(+). Regulated by guanine the nucleotide exchange factor (GEF) BLOC-3 complex composed of HPS1 and HPS4 which promote the exchange of bound GDP for free GTP. Regulated by the GTPase activating protein (GAP) SGSM2/RUTBC1 which increases the GTP hydrolysis activity. Inhibited by GDP dissociation inhibitors (GDIs) which prevent Rab-GDP dissociation. In terms of biological role, the small GTPases Rab are key regulators of intracellular membrane trafficking, from the formation of transport vesicles to their fusion with membranes. Rabs cycle between an inactive GDP-bound form and an active GTP-bound form that is able to recruit to membranes different set of downstream effectors directly responsible for vesicle formation, movement, tethering and fusion. Also acts as an A-kinase anchoring protein by binding to the type II regulatory subunit of protein kinase A and anchoring it to the mitochondrion. Also involved in synchronization of mitochondrial fission. Plays a role in the maturation of phagosomes that engulf pathogens, such as S.aureus and M.tuberculosis. Plays an important role in the control of melanin production and melanosome biogenesis. In concert with RAB38, regulates the proper trafficking of melanogenic enzymes TYR, TYRP1 and DCT/TYRP2 to melanosomes in melanocytes. Stimulates phosphorylation of RAB10 'Thr-73' by LRRK2. The sequence is that of Ras-related protein Rab-32 from Mus musculus (Mouse).